A 701-amino-acid polypeptide reads, in one-letter code: MGHLLSKEPRNRPSQKRPRCCSWCRRRRPLLRLPRRTPAKVPPQPAAPRSRDCFFRGPCMLCFIVHSPGAPAPAGPEEEPPLSPPPRDGAYAAASSSQHLARRYAALAAEDCAAAARRFLLSSAAAAAAAAASASSPASCCKELGLAAAAAWEQQGRSLFLASLGPVRFLGPPAAVQLFRGPTPSPAELPTPPEMVCKRKGAGVPACTPCKQPRCGGGGCGGGGGGGGGGGPAGGGASPPRPPDAGCCQAPEQPPQPLCPPPSSPTSEGAPTEAGGDAVRAGGTAPLSAQQQHECGDADCRESPENPCDCHREPPPETPDINQLPPSILLKIFSNLSLDERCLSASLVCKYWRDLCLDFQFWKQLDLSSRQQVTDELLEKIASRSQNIIEINISDCRSMSDNGVCVLAFKCPGLLRYTAYRCKQLSDTSIIAVASHCPLLQKVHVGNQDKLTDEGLKQLGSKCRELKDIHFGQCYKISDEGMIVIAKGCLKLQRIYMQENKLVTDQSVKAFAEHCPELQYVGFMGCSVTSKGVIHLTKLRNLSSLDLRHITELDNETVMEIVKRCKNLSSLNLCLNWIINDRCVEVIAKEGQNLKELYLVSCKITDYALIAIGRYSMTIETVDVGWCKEITDQGATLIAQSSKSLRYLGLMRCDKVNEVTVEQLVQQYPHITFSTVLQDCKRTLERAYQMGWTPNMSAASS.

Positions 1–11 (MGHLLSKEPRN) are enriched in basic and acidic residues. Disordered regions lie at residues 1 to 20 (MGHLLSKEPRNRPSQKRPRC), 72 to 94 (APAGPEEEPPLSPPPRDGAYAAA), and 227 to 300 (GGGG…DADC). The segment covering 227–237 (GGGGGPAGGGA) has biased composition (gly residues). Positions 252 to 264 (EQPPQPLCPPPSS) are enriched in pro residues. The region spanning 318-365 (TPDINQLPPSILLKIFSNLSLDERCLSASLVCKYWRDLCLDFQFWKQL) is the F-box domain.

It belongs to the FBXL17 family. As to quaternary structure, part of the SCF (SKP1-CUL1-F-box) E3 ubiquitin-protein ligase complex SCF(FBXL17) composed of CUL1, SKP1, RBX1 and FBXL17. Interacts with BTB domain-containing proteins such as KLHL12, BCL6 and BACH1; specifically recognizes and binds a conserved degron of non-consecutive residues present at the interface of BTB dimers of aberrant composition. Interacts with SUFU. Interacts with PRMT1.

Its subcellular location is the cytoplasm. It localises to the nucleus. Its function is as follows. Substrate-recognition component of the SCF(FBXL17) E3 ubiquitin ligase complex, a key component of a quality control pathway required to ensure functional dimerization of BTB domain-containing proteins (dimerization quality control, DQC). FBXL17 specifically recognizes and binds a conserved degron of non-consecutive residues present at the interface of BTB dimers of aberrant composition: aberrant BTB dimer are then ubiquitinated by the SCF(FBXL17) complex and degraded by the proteasome. The ability of the SCF(FBXL17) complex to eliminate compromised BTB dimers is required for the differentiation and survival of neural crest and neuronal cells. The SCF(FBXL17) complex mediates ubiquitination and degradation of BACH1. The SCF(FBXL17) complex is also involved in the regulation of the hedgehog/smoothened (Hh) signaling pathway by mediating the ubiquitination and degradation of SUFU, allowing the release of GLI1 from SUFU for proper Hh signal transduction. The SCF(FBXL17) complex mediates ubiquitination and degradation of PRMT1. This is F-box/LRR-repeat protein 17 from Homo sapiens (Human).